We begin with the raw amino-acid sequence, 334 residues long: Trans-1,2-dihydrobenzene-1,2-diol dehydrogenase (334 aa).

Belongs to the Gfo/Idh/MocA family. In terms of assembly, homodimer.

It catalyses the reaction (1R,2R)-1,2-dihydrobenzene-1,2-diol + NADP(+) = catechol + NADPH + H(+). It carries out the reaction D-xylose + NADP(+) = D-xylono-1,5-lactone + NADPH + H(+). The chain is Trans-1,2-dihydrobenzene-1,2-diol dehydrogenase (dhdh) from Danio rerio (Zebrafish).